The primary structure comprises 863 residues: MGCVKLVFFMLYVFLFQLVSSSSLPHLCPEDQALALLQFKNMFTVNPNAFHYCPDITGREIQSYPRTLSWNKSTSCCSWDGVHCDETTGQVIALDLRCSQLQGKFHSNSSLFQLSNLKRLDLSNNNFIGSLISPKFGEFSDLTHLDLSDSSFTGVIPSEISHLSKLHVLLIGDQYGLSIVPHNFEPLLKNLTQLRELNLYEVNLSSTVPSNFSSHLTTLQLSGTGLRGLLPERVFHLSDLEFLDLSYNSQLMVRFPTTKWNSSASLMKLYVHSVNIADRIPESFSHLTSLHELDMGYTNLSGPIPKPLWNLTNIESLDLRYNHLEGPIPQLPIFEKLKKLSLFRNDNLDGGLEFLSFNTQLERLDLSSNSLTGPIPSNISGLQNLECLYLSSNHLNGSIPSWIFSLPSLVELDLSNNTFSGKIQEFKSKTLSAVTLKQNKLKGRIPNSLLNQKNLQLLLLSHNNISGHISSAICNLKTLILLDLGSNNLEGTIPQCVVERNEYLSHLDLSKNRLSGTINTTFSVGNILRVISLHGNKLTGKVPRSMINCKYLTLLDLGNNMLNDTFPNWLGYLFQLKILSLRSNKLHGPIKSSGNTNLFMGLQILDLSSNGFSGNLPERILGNLQTMKEIDESTGFPEYISDPYDIYYNYLTTISTKGQDYDSVRILDSNMIINLSKNRFEGHIPSIIGDLVGLRTLNLSHNVLEGHIPASFQNLSVLESLDLSSNKISGEIPQQLASLTFLEVLNLSHNHLVGCIPKGKQFDSFGNTSYQGNDGLRGFPLSKLCGGEDQVTTPAELDQEEEEEDSPMISWQGVLVGYGCGLVIGLSVIYIMWSTQYPAWFSRMDLKLEHIITTKMKKHKKRY.

Positions 1-21 are cleaved as a signal peptide; that stretch reads MGCVKLVFFMLYVFLFQLVSS. At 22–812 the chain is on the extracellular side; that stretch reads SSLPHLCPED…EEDSPMISWQ (791 aa). An N-cap region spans residues 24–90; that stretch reads LPHLCPEDQA…GVHCDETTGQ (67 aa). Residues Asn71 and Asn108 are each glycosylated (N-linked (GlcNAc...) asparagine). Residues 91–114 form an LRR 1; degenerate repeat; that stretch reads VIALDLRCSQLQGKFHSNSSLFQL. 2 LRR repeats span residues 115–138 and 140–163; these read SNLKRLDLSNNNFIGSLISPKFGE and SDLTHLDLSDSSFTGVIPSEISHL. One copy of the LRR 4; degenerate repeat lies at 164 to 190; the sequence is SKLHVLLIGDQYGLSIVPHNFEPLLKN. N-linked (GlcNAc...) asparagine glycans are attached at residues Asn190, Asn203, and Asn211. LRR repeat units lie at residues 191-213, 214-237, 240-262, 264-286, 287-311, and 312-336; these read LTQLRELNLYEVNLSSTVPSNFS, SHLTTLQLSGTGLRGLLPERVFHL, LEFLDLSYNSQLMVRFPTTKWNS, ASLMKLYVHSVNIADRIPESFSH, LTSLHELDMGYTNLSGPIPKPLWNL, and TNIESLDLRYNHLEGPIPQLPIFEK. The N-linked (GlcNAc...) asparagine glycan is linked to Asn261. N-linked (GlcNAc...) asparagine glycosylation is found at Asn299 and Asn310. The stretch at 337-357 is one LRR 11; degenerate repeat; that stretch reads LKKLSLFRNDNLDGGLEFLSF. 15 LRR repeats span residues 358–382, 383–406, 408–428, 429–452, 454–476, 477–500, 502–524, 525–549, 551–572, 573–597, 599–623, 667–690, 691–714, 715–739, and 741–759; these read NTQLERLDLSSNSLTGPIPSNISGL, QNLECLYLSSNHLNGSIPSWIFSL, SLVELDLSNNTFSGKIQEFKS, KTLSAVTLKQNKLKGRIPNSLLNQ, NLQLLLLSHNNISGHISSAICNL, KTLILLDLGSNNLEGTIPQCVVER, EYLSHLDLSKNRLSGTINTTFSV, GNILRVISLHGNKLTGKVPRSMINC, YLTLLDLGNNMLNDTFPNWLGY, LFQLKILSLRSNKLHGPIKSSGNTN, FMGLQILDLSSNGFSGNLPERILGN, LDSNMIINLSKNRFEGHIPSIIGD, LVGLRTLNLSHNVLEGHIPASFQN, LSVLESLDLSSNKISGEIPQQLASL, and FLEVLNLSHNHLVGCIPKG. 3 N-linked (GlcNAc...) asparagine glycosylation sites follow: Asn378, Asn396, and Asn416. An N-linked (GlcNAc...) asparagine glycan is attached at Asn464. The N-linked (GlcNAc...) asparagine glycan is linked to Asn519. The N-linked (GlcNAc...) asparagine glycan is linked to Asn563. Asn674, Asn698, and Asn714 each carry an N-linked (GlcNAc...) asparagine glycan. N-linked (GlcNAc...) asparagine glycans are attached at residues Asn746 and Asn767. Positions 760–812 are C-cap/acidic domain; sequence KQFDSFGNTSYQGNDGLRGFPLSKLCGGEDQVTTPAELDQEEEEEDSPMISWQ. The chain crosses the membrane as a helical span at residues 813 to 833; sequence GVLVGYGCGLVIGLSVIYIMW. Residues 834–863 are Cytoplasmic-facing; it reads STQYPAWFSRMDLKLEHIITTKMKKHKKRY.

It belongs to the RLP family.

It is found in the cell membrane. In terms of biological role, involved in plant defense. Confers resistance to the fungal pathogen C.fulvum through recognition of the AVR9 elicitor protein. This is Receptor-like protein 9DC1 from Solanum pimpinellifolium (Currant tomato).